A 310-amino-acid polypeptide reads, in one-letter code: MSKIIFMGTPDFSTKILEMLIAEHEVIAVVTQPDRPVGRKKVMTPPPVKRVATKHQIPVYQPEKLKDSQELESLLSLESDLIVTAAFGQLLPESLLNAPKLGAINVHASLLPKYRGGAPIHQAIIDGEEETGITIMYMVKKLDAGNIISQQSIRIEEEDNVGTMHDKLSFLGAELLKKTLPSIIDNTNDSIPQDDALATFASNIRREDERVDWNMSAQAIHNHIRGLSPWPVAYTTMNEKNLKLFSAFIVKGKKGNPGTIIETTKHELIIATGSDDAIALTEIQPAGKKRMKVTDYLSGVQESLVGKVLL.

109-112 provides a ligand contact to (6S)-5,6,7,8-tetrahydrofolate; it reads SLLP.

It belongs to the Fmt family.

The enzyme catalyses L-methionyl-tRNA(fMet) + (6R)-10-formyltetrahydrofolate = N-formyl-L-methionyl-tRNA(fMet) + (6S)-5,6,7,8-tetrahydrofolate + H(+). In terms of biological role, attaches a formyl group to the free amino group of methionyl-tRNA(fMet). The formyl group appears to play a dual role in the initiator identity of N-formylmethionyl-tRNA by promoting its recognition by IF2 and preventing the misappropriation of this tRNA by the elongation apparatus. This is Methionyl-tRNA formyltransferase from Staphylococcus epidermidis (strain ATCC 12228 / FDA PCI 1200).